Here is a 438-residue protein sequence, read N- to C-terminus: Cell division cycle-associated 7-like protein (438 aa).

Positions 9-33 (IPKEVADIFNAPSDDEEFVGFQDDV) match the Integrase domain-binding motif 1 (IBM1) motif. At serine 21 the chain carries Phosphoserine. Residues 55–114 (ACLHSKYFTEELRRIFKEDTDSDNEDFEGFTESELNIGSNPELIESELSDGDKTHPMMSD) form a PSIP1-binding region. Positions 62–88 (FTEELRRIFKEDTDSDNEDFEGFTESE) match the Integrase domain-binding motif 2 (IBM2) motif. The segment at 72–199 (EDTDSDNEDF…ESRAESQETS (128 aa)) is disordered. The residue at position 74 (threonine 74) is a Phosphothreonine. The segment covering 74–85 (TDSDNEDFEGFT) has biased composition (acidic residues). Serine 76 carries the post-translational modification Phosphoserine. Threonine 85 is modified (phosphothreonine). 7 positions are modified to phosphoserine: serine 100, serine 103, serine 113, serine 135, serine 136, serine 183, and serine 185. Positions 113–123 (SDEEDDDDEEE) are enriched in acidic residues. The segment covering 166-183 (TDLRREKSCRQPKEKEDS) has biased composition (basic and acidic residues). Residues 201–223 (ALLKRAMNIKENKAMLAQLLAEL) form an MYC-binding region. Residues lysine 210 and lysine 213 each participate in a glycyl lysine isopeptide (Lys-Gly) (interchain with G-Cter in SUMO2) cross-link. Serine 249 carries the phosphoserine modification.

Interacts with MYC. Interacts (via IBM motifs) with PSIP1 (via IBD domain); phosphorylation increases its affinity for PSIP1. Phosphorylation increases its interaction with PSIP1.

The protein resides in the cytoplasm. The protein localises to the nucleus. In terms of biological role, plays a role in transcriptional regulation as a repressor that inhibits monoamine oxidase A (MAOA) activity and gene expression by binding to the promoter. Plays an important oncogenic role in mediating the full transforming effect of MYC in medulloblastoma cells. Involved in apoptotic signaling pathways; May act downstream of P38-kinase and BCL-2, but upstream of CASP3/caspase-3 as well as CCND1/cyclin D1 and E2F1. The polypeptide is Cell division cycle-associated 7-like protein (Cdca7l) (Rattus norvegicus (Rat)).